The sequence spans 308 residues: Bifunctional protein FolD (308 aa).

NADP(+)-binding positions include 171-173 (GRS), S198, and I239.

This sequence belongs to the tetrahydrofolate dehydrogenase/cyclohydrolase family. In terms of assembly, homodimer.

It catalyses the reaction (6R)-5,10-methylene-5,6,7,8-tetrahydrofolate + NADP(+) = (6R)-5,10-methenyltetrahydrofolate + NADPH. It carries out the reaction (6R)-5,10-methenyltetrahydrofolate + H2O = (6R)-10-formyltetrahydrofolate + H(+). Its pathway is one-carbon metabolism; tetrahydrofolate interconversion. Catalyzes the oxidation of 5,10-methylenetetrahydrofolate to 5,10-methenyltetrahydrofolate and then the hydrolysis of 5,10-methenyltetrahydrofolate to 10-formyltetrahydrofolate. The chain is Bifunctional protein FolD from Borreliella burgdorferi (strain ZS7) (Borrelia burgdorferi).